The primary structure comprises 404 residues: Tryptophan synthase beta chain (404 aa).

Position 99 is an N6-(pyridoxal phosphate)lysine (K99).

This sequence belongs to the TrpB family. Tetramer of two alpha and two beta chains. Pyridoxal 5'-phosphate serves as cofactor.

The catalysed reaction is (1S,2R)-1-C-(indol-3-yl)glycerol 3-phosphate + L-serine = D-glyceraldehyde 3-phosphate + L-tryptophan + H2O. The protein operates within amino-acid biosynthesis; L-tryptophan biosynthesis; L-tryptophan from chorismate: step 5/5. In terms of biological role, the beta subunit is responsible for the synthesis of L-tryptophan from indole and L-serine. This is Tryptophan synthase beta chain from Rhizobium rhizogenes (strain K84 / ATCC BAA-868) (Agrobacterium radiobacter).